Consider the following 865-residue polypeptide: LINE-1 type transposase domain-containing protein 1 (865 aa).

Residue S2 is modified to N-acetylserine. Phosphoserine is present on S2. At T149 the chain carries Phosphothreonine. S154 is modified (phosphoserine). The segment at 370–508 is disordered; it reads EMKNLETQEE…EKKASRRQKE (139 aa). 2 stretches are compositionally biased toward acidic residues: residues 376–440 and 472–483; these read TQEE…EQTS and SVEDSESEEEEE. Phosphoserine is present on residues S472, S476, and S478. A compositionally biased stretch (basic and acidic residues) spans 498–508; it reads TEKKASRRQKE. Phosphoserine occurs at positions 518, 561, and 573. The segment covering 590 to 608 has biased composition (basic and acidic residues); that stretch reads EEKKHRTLHTEELTSKEAD. Residues 590–612 are disordered; sequence EEKKHRTLHTEELTSKEADLTEE. Residues S640, S648, and S665 each carry the phosphoserine modification. A coiled-coil region spans residues 642-684; the sequence is VLEIENSVDDLSSRMDILEERIDSLEDQIEEFSKDTMQMTKQI.

This sequence belongs to the transposase 22 family.

This chain is LINE-1 type transposase domain-containing protein 1 (L1TD1), found in Homo sapiens (Human).